Consider the following 2220-residue polypeptide: Non-reducing polyketide synthase stbA (2220 aa).

An N-terminal acylcarrier protein transacylase domain (SAT) region spans residues 10 to 255; it reads IFSPQNSPPK…HDATNTDMAQ (246 aa). In terms of domain architecture, Ketosynthase family 3 (KS3) spans 379-803; sequence SDAIAVVGAG…GSNSALICSE (425 aa). Active-site for beta-ketoacyl synthase activity residues include C551, H687, and H726. The malonyl-CoA:ACP transacylase (MAT) domain stretch occupies residues 906–1207; that stretch reads LAFSGQSRTN…ADATQHTFQA (302 aa). The For acyl/malonyl transferase activity role is filled by S993. The interval 1287–1414 is N-terminal hotdog fold; that stretch reads EPRAAQLVRY…GDFTMTAGPH (128 aa). The 303-residue stretch at 1287-1589 folds into the PKS/mFAS DH domain; that stretch reads EPRAAQLVRY…FHKTSMTKLL (303 aa). The segment at 1292 to 1588 is product template (PT) domain; the sequence is QLVRYKGALG…HFHKTSMTKL (297 aa). The active-site Proton acceptor; for dehydratase activity is the H1323. Residues 1436–1589 are C-terminal hotdog fold; sequence DAEKLRKRTA…FHKTSMTKLL (154 aa). The Proton donor; for dehydratase activity role is filled by D1500. Carrier domains lie at 1634–1711 and 1742–1821; these read AAGP…SGGA and PAGP…AADV. An O-(pantetheine 4'-phosphoryl)serine mark is found at S1671 and S1779. Residues 1879–2210 are thioesterase (TE) domain; the sequence is TRFRMETVVY…YDFIFTELEN (332 aa). Catalysis depends on for thioesterase activity residues S1999 and D2148.

The enzyme catalyses 3 malonyl-CoA + acetyl-CoA + 2 H(+) = orsellinate + 3 CO2 + 4 CoA. Its pathway is secondary metabolite biosynthesis; terpenoid biosynthesis. Functionally, non-reducing polyketide synthase; part of the cluster that mediates the biosynthesis of LL-Z1272-beta, also known as ilicicolin B, a prenylated aryl-aldehyde produced by several fungi and that serves as a key pathway intermediate for many fungal meroterpenoids. The first step in the pathway is performed by the non-reducing polyketide synthase stbA that produces orsellinic acid by condensing acetyl-CoA with 3 malonyl-CoA units. The prenyltransferase stbC then prenylates orsenilic acid into grifolic acid. Finally, grifolic acid is reduced to ilicicolin B by the NRPS-like protein stbB. This Stachybotrys bisbyi (Hyalostachybotrys bisbyi) protein is Non-reducing polyketide synthase stbA.